Consider the following 173-residue polypeptide: Dirigent protein 8 (173 aa).

Residues 1-22 form the signal peptide; that stretch reads MTNLILIFAAQILLFYAVASVG. N-linked (GlcNAc...) asparagine glycosylation is found at Asn-69, Asn-90, and Asn-125.

This sequence belongs to the plant dirigent protein family. As to quaternary structure, homodimer.

Its subcellular location is the secreted. The protein localises to the extracellular space. The protein resides in the apoplast. Functionally, dirigent proteins impart stereoselectivity on the phenoxy radical-coupling reaction, yielding optically active lignans from two molecules of coniferyl alcohol in the biosynthesis of lignans, flavonolignans, and alkaloids and thus plays a central role in plant secondary metabolism. The sequence is that of Dirigent protein 8 (DIR8) from Arabidopsis thaliana (Mouse-ear cress).